The chain runs to 258 residues: Methionine aminopeptidase (258 aa).

His84 contacts substrate. A divalent metal cation-binding residues include Asp102, Asp113, and His176. His183 contacts substrate. The a divalent metal cation site is built by Glu211 and Glu242.

Belongs to the peptidase M24A family. Methionine aminopeptidase type 1 subfamily. Monomer. The cofactor is Co(2+). Requires Zn(2+) as cofactor. It depends on Mn(2+) as a cofactor. Fe(2+) serves as cofactor.

It carries out the reaction Release of N-terminal amino acids, preferentially methionine, from peptides and arylamides.. Functionally, removes the N-terminal methionine from nascent proteins. The N-terminal methionine is often cleaved when the second residue in the primary sequence is small and uncharged (Met-Ala-, Cys, Gly, Pro, Ser, Thr, or Val). Requires deformylation of the N(alpha)-formylated initiator methionine before it can be hydrolyzed. The chain is Methionine aminopeptidase from Aquifex aeolicus (strain VF5).